Consider the following 40-residue polypeptide: Photosystem II reaction center protein X (40 aa).

Residues 10–30 (FFYSILFGAIVLGLLGGGFIF) traverse the membrane as a helical segment.

This sequence belongs to the PsbX family. Type 1 subfamily. In terms of assembly, PSII is composed of 1 copy each of membrane proteins PsbA, PsbB, PsbC, PsbD, PsbE, PsbF, PsbH, PsbI, PsbJ, PsbK, PsbL, PsbM, PsbT, PsbX, PsbY, PsbZ, Psb30/Ycf12, peripheral proteins PsbO, CyanoQ (PsbQ), PsbU, PsbV and a large number of cofactors. It forms dimeric complexes.

The protein resides in the cellular thylakoid membrane. Involved in the binding and/or turnover of quinones at the Q(B) site of photosystem II (PSII). PSII is a light-driven water plastoquinone oxidoreductase, using light energy to abstract electrons from H(2)O, generating a proton gradient subsequently used for ATP formation. The chain is Photosystem II reaction center protein X from Acaryochloris marina (strain MBIC 11017).